Consider the following 72-residue polypeptide: Enterobactin biosynthesis protein YbdZ (72 aa).

This sequence belongs to the MbtH-like family.

Its function is as follows. Involved in the biosynthesis of the siderophore enterobactin (enterochelin), which is a macrocyclic trimeric lactone of N-(2,3-dihydroxybenzoyl)-serine. Plays a role in the catalytic function of EntF. It is required for adenylation of amino acids in non-ribosomal peptide biosynthesis. This Escherichia coli (strain K12) protein is Enterobactin biosynthesis protein YbdZ.